An 883-amino-acid chain; its full sequence is Putative pentatricopeptide repeat-containing protein At1g13800 (883 aa).

PPR repeat units follow at residues 145 to 180, 181 to 215, 216 to 251, 253 to 285, 290 to 324, 325 to 359, 360 to 394, 395 to 429, 430 to 464, 465 to 499, 500 to 534, 537 to 561, 563 to 598, 599 to 633, 634 to 668, 697 to 731, 760 to 794, 795 to 829, and 830 to 864; these read LIRVSTALVKAYANLDMFDEAIDIFFRAYYSLGRAP, DIKALNFLISRMIASGRSDMVVGFFWEIERLGLDA, DAHTYVLVVQALWRNDDKEELEKLLSRLLISETRNP, VFYLNFIEGLCLNQMTDIAYFLLQPLRDANILV, LGIAYRKVVRGLCYEMRIEDAESVVLDMEKHGIDP, DVYVYSAIIEGHRKNMNIPKAVDVFNKMLKKRKRI, NCVIVSSILQCYCQMGNFSEAYDLFKEFRETNISL, DRVCYNVAFDALGKLGKVEEAIELFREMTGKGIAP, DVINYTTLIGGCCLQGKCSDAFDLMIEMDGTGKTP, DIVIYNVLAGGLATNGLAQEAFETLKMMENRGVKP, TYVTHNMVIEGLIDAGELDKAEAFYESLEHKSREN, SMVKGFCAAGCLDHAFERFIRLEFP, PKSVYFTLFTSLCAEKDYISKAQDLLDRMWKLGVEP, EKSMYGKLIGAWCRVNNVRKAREFFEILVTKKIVP, DLFTYTIMINTYCRLNEPKQAYALFEDMKRRDVKP, DVVYYTIMINRYCHLNDLKKVYALFKDMKRREIVP, DVFYYTVLIDWQCKIGDLGEAKRIFDQMIESGVDP, DAAPYTALIACCCKMGYLKEAKMIFDRMIESGVKP, and DVVPYTALIAGCCRNGFVLKAVKLVKEMLEKGIKP.

Belongs to the PPR family. P subfamily.

The sequence is that of Putative pentatricopeptide repeat-containing protein At1g13800 from Arabidopsis thaliana (Mouse-ear cress).